Reading from the N-terminus, the 270-residue chain is Diaminopimelate epimerase (270 aa).

Substrate-binding residues include N15, Q49, and N66. C75 functions as the Proton donor in the catalytic mechanism. Substrate is bound by residues 76–77, N155, N187, and 204–205; these read GN and ER. The Proton acceptor role is filled by C213. 214 to 215 provides a ligand contact to substrate; the sequence is GS.

This sequence belongs to the diaminopimelate epimerase family. In terms of assembly, homodimer.

It localises to the cytoplasm. It carries out the reaction (2S,6S)-2,6-diaminopimelate = meso-2,6-diaminopimelate. Its pathway is amino-acid biosynthesis; L-lysine biosynthesis via DAP pathway; DL-2,6-diaminopimelate from LL-2,6-diaminopimelate: step 1/1. Catalyzes the stereoinversion of LL-2,6-diaminopimelate (L,L-DAP) to meso-diaminopimelate (meso-DAP), a precursor of L-lysine and an essential component of the bacterial peptidoglycan. The sequence is that of Diaminopimelate epimerase from Rickettsia conorii (strain ATCC VR-613 / Malish 7).